The sequence spans 118 residues: Co-chaperonin GroES (118 aa).

This sequence belongs to the GroES chaperonin family. In terms of assembly, heptamer of 7 subunits arranged in a ring. Interacts with the chaperonin GroEL.

It is found in the cytoplasm. Its function is as follows. Together with the chaperonin GroEL, plays an essential role in assisting protein folding. The GroEL-GroES system forms a nano-cage that allows encapsulation of the non-native substrate proteins and provides a physical environment optimized to promote and accelerate protein folding. GroES binds to the apical surface of the GroEL ring, thereby capping the opening of the GroEL channel. This Helicobacter pylori (strain HPAG1) protein is Co-chaperonin GroES.